A 672-amino-acid polypeptide reads, in one-letter code: Transmembrane 9 superfamily member 2 (672 aa).

The N-terminal stretch at 1-18 (MKRGVWLLIYCYATLTKG) is a signal peptide. At 19–307 (FSLPGLSPTT…DKYLHIYDPQ (289 aa)) the chain is on the extracellular side. A helical membrane pass occupies residues 308 to 328 (IQWFSLINFSVIVILLSSVVM). At 329 to 383 (HSLLRALKSDLARYNELNLDNEFHEDSGWKLGHGDVFRTPSKSMLLSILVGSGMQ) the chain is on the cytoplasmic side. A helical membrane pass occupies residues 384–404 (LFLMVMCSIFFAAVGLVSPVS). At 405–410 (RGSLPT) the chain is on the extracellular side. The chain crosses the membrane as a helical span at residues 411-431 (VMFVLYALFGFVGSYASMGVY). Over 432 to 447 (KFFRGPYWKANMILTP) the chain is Cytoplasmic. Residues 448–468 (ILLPGAIFLLIVIMNFFLLFA) traverse the membrane as a helical segment. The Extracellular segment spans residues 469–479 (HSSGVIPARSL). Residues 480–500 (FFIILLWFLVSVPLSFAGSIV) traverse the membrane as a helical segment. The Cytoplasmic segment spans residues 501–532 (AHKQCNWDEHPTKTNQIARQIPYQPWYLRTAQ). A helical membrane pass occupies residues 533–553 (ATLIAGIFSFGSIAVELYFIY). Topologically, residues 554–565 (SSLWFNKIFYMF) are extracellular. A helical membrane pass occupies residues 566–586 (GFLLFSFLLLTLTTSLVTILI). Residues 587-601 (TYYSLCLENWLWQWR) lie on the Cytoplasmic side of the membrane. A helical transmembrane segment spans residues 602–622 (SFIIGGLGCSIYTFIHSILFT). The Extracellular segment spans residues 623 to 628 (KFKLGG). Residues 629–649 (VITVVLYLGYSLIISALCCVV) form a helical membrane-spanning segment. Residues 650–672 (TGAIGFFSSMFFIRKIYSAIKVE) are Cytoplasmic-facing.

The protein belongs to the nonaspanin (TM9SF) (TC 9.A.2) family.

The protein localises to the vacuole membrane. In terms of biological role, with EMP70 and TMN3, plays a critical role in the late stages of a nutrient-controlled pathway notably regulating FLO11 gene expression. Acts downstream of RAS2 and TOR. Essential for cell adhesion and filamentous growth. May play a role as effector of cellular copper homeostasis. This chain is Transmembrane 9 superfamily member 2 (TMN2), found in Saccharomyces cerevisiae (strain ATCC 204508 / S288c) (Baker's yeast).